A 245-amino-acid polypeptide reads, in one-letter code: Collagen triple helix repeat-containing protein 1 (245 aa).

A signal peptide spans 1 to 32 (MHPQGRAAPPQLLLGLFLVLLLLLQLSAPISA). Residues 59-92 (QGPAGVPGRDGSPGANGIPGTPGIPGRDGFKGEK) form the Collagen-like domain. A disordered region spans residues 64 to 87 (VPGRDGSPGANGIPGTPGIPGRDG). An N-linked (GlcNAc...) asparagine glycan is attached at asparagine 188.

Post-translationally, N-glycosylated.

It localises to the secreted. The protein resides in the extracellular space. It is found in the extracellular matrix. Functionally, may act as a negative regulator of collagen matrix deposition. In Mus musculus (Mouse), this protein is Collagen triple helix repeat-containing protein 1 (Cthrc1).